Reading from the N-terminus, the 496-residue chain is Cruciferin BnC2 (496 aa).

The N-terminal stretch at 1–23 (MARLSSLLYFSITVLIFLHGSTA) is a signal peptide. Cystine bridges form between C30–C63 and C106–C313. Cupin type-1 domains follow at residues 35–269 (LNAL…RTAQ) and 319–468 (DNLD…EEAR). T109 is modified (phosphothreonine). The disordered stretch occupies residues 114 to 170 (SVFQPGSGSPFGEGQGQGQQGQGQGQGQGQGKGQQGQGKGQQGQSQGQQGQGQGFRD). A compositionally biased stretch (gly residues) spans 122–154 (SPFGEGQGQGQQGQGQGQGQGQGKGQQGQGKGQ). The residue at position 336 (Y336) is a Phosphotyrosine. S338 carries the post-translational modification Phosphoserine. At T432 the chain carries Phosphothreonine.

The protein belongs to the 11S seed storage protein (globulins) family. Hexamer; each subunit is composed of an acidic and a basic chain derived from a single precursor and linked by a disulfide bond.

In terms of biological role, this is a seed storage protein. The polypeptide is Cruciferin BnC2 (BnC2) (Brassica napus (Rape)).